The following is a 314-amino-acid chain: MAPPQVLAFGLLVAAATAAVAADQEGCVCENYKLTTNCSVNALGQCQCTSVGTQHSVICTKLATKCLVMKAEMNHSKSGRRGKPEGAIQNNDGLYDPECDDKGLFKAKQCNGTSTCWCVNTAGVRRTDKDSEISCSEPVRTYWIIIELKHKTREKPYDLQSLQSALKDVITNRYQLDPKYITNILYENDVITIDLVQNSSQKTQNDVDIADVAYYFEKDVKDESLFHSKRMDLRVNGELLDLDPGRTSIYYVDEKPPEFSMQGLQAGIIAVIVVVVVAIIAGIIVLVVSRKKSMTKYEKAEIKEMGEMHRELNA.

Positions 1-23 (MAPPQVLAFGLLVAAATAAVAAD) are cleaved as a signal peptide. Residues 24–265 (QEGCVCENYK…PPEFSMQGLQ (242 aa)) lie on the Extracellular side of the membrane. Intrachain disulfides connect Cys-27–Cys-46, Cys-29–Cys-59, Cys-38–Cys-48, Cys-66–Cys-99, Cys-110–Cys-116, and Cys-118–Cys-135. N-linked (GlcNAc...) asparagine glycosylation occurs at Asn-37. The Thyroglobulin type-1 domain occupies 63–135 (ATKCLVMKAE…RTDKDSEISC (73 aa)). 2 N-linked (GlcNAc...) asparagine glycosylation sites follow: Asn-74 and Asn-111. N-linked (GlcNAc...) asparagine glycosylation is present at Asn-198. The chain crosses the membrane as a helical span at residues 266 to 288 (AGIIAVIVVVVVAIIAGIIVLVV). The Cytoplasmic portion of the chain corresponds to 289–314 (SRKKSMTKYEKAEIKEMGEMHRELNA).

The protein belongs to the EPCAM family. In terms of assembly, monomer. Interacts with phosphorylated CLDN7. Glycosylation at Asn-198 is crucial for protein stability.

Its subcellular location is the lateral cell membrane. The protein resides in the cell junction. The protein localises to the tight junction. Functionally, may act as a physical homophilic interaction molecule between intestinal epithelial cells (IECs) and intraepithelial lymphocytes (IELs) at the mucosal epithelium for providing immunological barrier as a first line of defense against mucosal infection. Plays a role in embryonic stem cells proliferation and differentiation. Up-regulates the expression of FABP5, MYC and cyclins A and E. This is Epithelial cell adhesion molecule (EPCAM) from Bos taurus (Bovine).